The following is a 248-amino-acid chain: 1-(5-phosphoribosyl)-5-[(5-phosphoribosylamino)methylideneamino] imidazole-4-carboxamide isomerase (248 aa).

Asp-8 serves as the catalytic Proton acceptor. Asp-131 acts as the Proton donor in catalysis.

Belongs to the HisA/HisF family.

The protein resides in the cytoplasm. The enzyme catalyses 1-(5-phospho-beta-D-ribosyl)-5-[(5-phospho-beta-D-ribosylamino)methylideneamino]imidazole-4-carboxamide = 5-[(5-phospho-1-deoxy-D-ribulos-1-ylimino)methylamino]-1-(5-phospho-beta-D-ribosyl)imidazole-4-carboxamide. It participates in amino-acid biosynthesis; L-histidine biosynthesis; L-histidine from 5-phospho-alpha-D-ribose 1-diphosphate: step 4/9. The polypeptide is 1-(5-phosphoribosyl)-5-[(5-phosphoribosylamino)methylideneamino] imidazole-4-carboxamide isomerase (Cupriavidus pinatubonensis (strain JMP 134 / LMG 1197) (Cupriavidus necator (strain JMP 134))).